Consider the following 408-residue polypeptide: Protein ZNF365 (408 aa).

Residue S16 is modified to Phosphoserine. The C2H2-type; degenerate zinc finger occupies 26–51 (FRCPRCGDHTRFRSLSSLRAHLEFSH). Phosphoserine is present on residues S139 and S146. Residues 170-298 (VEAVDRTIEK…QLEYYQSQQA (129 aa)) are a coiled coil. T176 carries the phosphothreonine modification. At S370 the chain carries Phosphoserine.

Homodimer. Interacts with NDE1 and NDEL1. Interacts with DISC1. Interacts with PARP1. Interacts with MCRS1. Detected in several tissues, with highest levels in brain. Also expressed during embryonic development. Expressed in cerebral cortex, hippocampus, striatum, inferior colliculus and thalamus.

Its subcellular location is the cytoplasm. It localises to the cytoskeleton. The protein resides in the microtubule organizing center. The protein localises to the centrosome. Its function is as follows. Contributes to genomic stability by preventing telomere dysfunction. Involved in the morphogenesis of basket cells in the somatosensory cortex during embryogenesis. Involved in the positive regulation of oligodendrocyte differentiation during postnatal growth. Involved in dendritic arborization, morphogenesis of spine density dendrite, and establishment of postsynaptic dendrite density in cortical pyramidal neurons. Involved in the regulation of neurogenesis. Negatively regulates neurite outgrowth. Involved in homologous recombination (HR) repair pathway. Required for proper resolution of DNA double-strand breaks (DSBs) by HR. Is required for recovery of stalled replication forks, and directly contributes to genomic stability. Interacts with PARP1 and mediates MRE11-dependent DNA end resection during replication fork recovery. The polypeptide is Protein ZNF365 (Znf365) (Mus musculus (Mouse)).